A 114-amino-acid chain; its full sequence is Non-specific lipid-transfer protein 1 (114 aa).

Positions 1–23 (MEIAGKIACFVVLCMVVAAPCAE) are cleaved as a signal peptide. Disulfide bonds link cysteine 27–cysteine 73, cysteine 37–cysteine 50, cysteine 51–cysteine 96, and cysteine 71–cysteine 110.

It belongs to the plant LTP family. High expression in leaf epidermis and shoot apex, and also in root epidermis during seedling germination.

Plant non-specific lipid-transfer proteins transfer phospholipids as well as galactolipids across membranes. Binds cis-unsaturated fatty acids and jasmonic acid with a higher affinity than linear chain fatty acids. Formation of the complex with jasmonic acid results in a conformational change facilitating the LPT1 binding on the elicitin plasma membrane receptor that is known to be involved in plant defense induction. May also play a role in wax or cutin deposition in the cell walls of expanding epidermal cells and certain secretory tissues. The polypeptide is Non-specific lipid-transfer protein 1 (LTP1) (Nicotiana tabacum (Common tobacco)).